Here is a 256-residue protein sequence, read N- to C-terminus: Biosynthetic peptidoglycan transglycosylase (256 aa).

Residues 26–48 (VARWLAYAGGVFAGAWLATQLYY) traverse the membrane as a helical segment.

The protein belongs to the glycosyltransferase 51 family.

It is found in the cell inner membrane. It carries out the reaction [GlcNAc-(1-&gt;4)-Mur2Ac(oyl-L-Ala-gamma-D-Glu-L-Lys-D-Ala-D-Ala)](n)-di-trans,octa-cis-undecaprenyl diphosphate + beta-D-GlcNAc-(1-&gt;4)-Mur2Ac(oyl-L-Ala-gamma-D-Glu-L-Lys-D-Ala-D-Ala)-di-trans,octa-cis-undecaprenyl diphosphate = [GlcNAc-(1-&gt;4)-Mur2Ac(oyl-L-Ala-gamma-D-Glu-L-Lys-D-Ala-D-Ala)](n+1)-di-trans,octa-cis-undecaprenyl diphosphate + di-trans,octa-cis-undecaprenyl diphosphate + H(+). The protein operates within cell wall biogenesis; peptidoglycan biosynthesis. Its function is as follows. Peptidoglycan polymerase that catalyzes glycan chain elongation from lipid-linked precursors. This chain is Biosynthetic peptidoglycan transglycosylase, found in Burkholderia thailandensis (strain ATCC 700388 / DSM 13276 / CCUG 48851 / CIP 106301 / E264).